The following is a 368-amino-acid chain: MSVGIVEEQSVTFETDLRLESGRILGPITLAYETYGRLNADRSNAILVAHAWTGNAHLAGKYSEDDPKPGWWDAIVGPGRLLDTDRWFVICSNVIGSCYGSTGPASVNPKTGKRYNLSFPVITVRDMVRAQALLLDHLGIERLLTVLGGSMGGMQALEWATQFPDRVRSAIALATTSRPSPQAISLNAVARWAIFNDPSWKKGEYRKNPKDGLALARGIGHITFLSDESMWQKFGRRYSARDGLFDFFGQFEVERYLTYNGYNFVDRFDTNSFLYLAKALDLYDVAWGYESLEDAFSRVTAPIQFFAFTSDWLYPPYQTEEMATTLRALGKEAEYHLIPSAYGHDAFLLEHETFAPMVRDFLARVERG.

Residues Asn-44–Glu-350 enclose the AB hydrolase-1 domain. Residue Ser-150 is the Nucleophile of the active site. Residue Arg-217 coordinates substrate. Residues Asp-311 and His-344 contribute to the active site. Asp-345 is a substrate binding site.

The protein belongs to the AB hydrolase superfamily. MetX family. Homodimer.

It is found in the cytoplasm. The enzyme catalyses L-homoserine + acetyl-CoA = O-acetyl-L-homoserine + CoA. Its pathway is amino-acid biosynthesis; L-methionine biosynthesis via de novo pathway; O-acetyl-L-homoserine from L-homoserine: step 1/1. In terms of biological role, transfers an acetyl group from acetyl-CoA to L-homoserine, forming acetyl-L-homoserine. The sequence is that of Homoserine O-acetyltransferase from Geobacter sulfurreducens (strain ATCC 51573 / DSM 12127 / PCA).